Reading from the N-terminus, the 139-residue chain is D-ribose pyranase (139 aa).

The active-site Proton donor is His20. Substrate contacts are provided by residues Asp28, His106, and 128-130 (YAN).

Belongs to the RbsD / FucU family. RbsD subfamily. In terms of assembly, homodecamer.

Its subcellular location is the cytoplasm. It carries out the reaction beta-D-ribopyranose = beta-D-ribofuranose. It functions in the pathway carbohydrate metabolism; D-ribose degradation; D-ribose 5-phosphate from beta-D-ribopyranose: step 1/2. Its function is as follows. Catalyzes the interconversion of beta-pyran and beta-furan forms of D-ribose. In Actinobacillus pleuropneumoniae serotype 7 (strain AP76), this protein is D-ribose pyranase.